The primary structure comprises 652 residues: Carboxypeptidase S1 homolog A (652 aa).

The signal sequence occupies residues 1-19; that stretch reads MRLAASIAVALPVIGAASA. A disulfide bond links cysteine 50 and cysteine 121. N-linked (GlcNAc...) asparagine glycans are attached at residues asparagine 77, asparagine 132, asparagine 161, asparagine 168, asparagine 184, and asparagine 202. Residue serine 238 is part of the active site. Asparagine 260, asparagine 299, asparagine 347, and asparagine 410 each carry an N-linked (GlcNAc...) asparagine glycan. 2 cysteine pairs are disulfide-bonded: cysteine 325/cysteine 361 and cysteine 332/cysteine 354. Residue aspartate 458 is part of the active site. Residue cysteine 461 coordinates substrate. N-linked (GlcNAc...) asparagine glycans are attached at residues asparagine 474, asparagine 492, and asparagine 505. Histidine 516 is an active-site residue. Glutamate 517 is a binding site for substrate. An N-linked (GlcNAc...) asparagine glycan is attached at asparagine 594. The segment at 608–628 is disordered; sequence AASKGNPPPTTTSSPTASPTA. Low complexity predominate over residues 618–628; that stretch reads TTSSPTASPTA. A lipid anchor (GPI-anchor amidated glycine) is attached at glycine 629. The propeptide at 630-652 is removed in mature form; it reads SAMLKAPVAMLAISALTVLAFYL.

This sequence belongs to the peptidase S10 family.

It is found in the cell membrane. The enzyme catalyses Preferential release of a C-terminal arginine or lysine residue.. In terms of biological role, extracellular serine carboxypeptidase that contributes to pathogenicity. The protein is Carboxypeptidase S1 homolog A (SCPA) of Arthroderma benhamiae (strain ATCC MYA-4681 / CBS 112371) (Trichophyton mentagrophytes).